The sequence spans 471 residues: Regulator of microtubule dynamics protein 3 (471 aa).

Residues 1–9 (MSSLGTLGG) are Mitochondrial intermembrane-facing. Residues 10–32 (ARAGLGLLLGTAAGLGFLCALYS) traverse the membrane as a helical segment. The Cytoplasmic portion of the chain corresponds to 33-471 (QRWKRTQRRG…LEELEVILGE (439 aa)). A disordered region spans residues 39–70 (QRRGQSQSQSNSLDYTQTSEPGRQVRPLRAAP). A compositionally biased stretch (low complexity) spans 41–50 (RGQSQSQSNS). Residues S44, S46, S50, and S57 each carry the phosphoserine modification. Positions 90–123 (LDRLEFVLTSLVALRREVEELRSSLQGLAGQIVG) form a coiled coil. The FFAT signature appears at 156–162 (VYFTAAS). Position 159 is a phosphothreonine (T159). The tract at residues 169–206 (AESEGGYTTANAESDYERDSERESDGDGEDEVSCETVK) is disordered. A phosphoserine mark is found at S182, S192, S212, and S233. The span at 183 to 193 (DYERDSERESD) shows a compositional bias: basic and acidic residues.

Belongs to the RMDN family. In terms of assembly, interacts with PTPN2. Interacts with microtubules. Interacts with VAPB. Interacts (via FFAT motif) with MOSPD2 (via MSP domain). Interacts (via phosphorylated FFAT motif) with MOSPD2, VAPA and VAPB. In terms of processing, phosphorylation at Thr-160 of the FFAT motif activates interaction with MOSPD2, VAPA and VAPB.

The protein localises to the mitochondrion outer membrane. It is found in the cytoplasm. The protein resides in the nucleus. It localises to the cytoskeleton. Its subcellular location is the spindle. The protein localises to the spindle pole. In terms of biological role, involved in cellular calcium homeostasis regulation. May participate in differentiation and apoptosis of keratinocytes. Overexpression induces apoptosis. This is Regulator of microtubule dynamics protein 3 from Bos taurus (Bovine).